We begin with the raw amino-acid sequence, 438 residues long: Na(+)/H(+) antiporter NhaA 2 (438 aa).

11 consecutive transmembrane segments (helical) span residues 21–41 (SGGI…NSPW), 66–86 (LHHW…GLEL), 102–122 (MLPI…FHFI), 130–150 (KGWG…LALL), 160–180 (IFLT…IALF), 183–203 (GELA…LIAG), 206–226 (LGVQ…VVLL), 308–328 (WVIF…VLQL), 341–361 (LGVA…FSWI), 376–396 (WMDV…SLFI), and 410–430 (AKLG…TVLS).

Belongs to the NhaA Na(+)/H(+) (TC 2.A.33) antiporter family.

The protein localises to the cell inner membrane. The enzyme catalyses Na(+)(in) + 2 H(+)(out) = Na(+)(out) + 2 H(+)(in). Functionally, na(+)/H(+) antiporter that extrudes sodium in exchange for external protons. The sequence is that of Na(+)/H(+) antiporter NhaA 2 from Syntrophotalea carbinolica (strain DSM 2380 / NBRC 103641 / GraBd1) (Pelobacter carbinolicus).